The following is a 383-amino-acid chain: uncharacterized protein (383 aa).

Positions 12, 18, 21, and 88 each coordinate [4Fe-4S] cluster. 4 residues coordinate S-adenosyl-L-methionine: Gln219, Phe246, Glu267, and Asp314. The Nucleophile role is filled by Cys341.

This sequence belongs to the class I-like SAM-binding methyltransferase superfamily. RNA M5U methyltransferase family.

This is an uncharacterized protein from Protochlamydia amoebophila (strain UWE25).